A 29-amino-acid polypeptide reads, in one-letter code: Cyclotide mela-7 (29 aa).

The cyclopeptide (Gly-Asn) cross-link spans 1-29 (GLPTCGETCFKGKCYTPGCSCSYPICKKN). 3 disulfides stabilise this stretch: cysteine 5-cysteine 19, cysteine 9-cysteine 21, and cysteine 14-cysteine 26.

Post-translationally, this is a cyclic peptide. In terms of processing, contains 3 disulfide bonds.

Probably participates in a plant defense mechanism (Potential). Binds to and induces leakage in phospholipd membranes, particularly ones containing 1-palmitoyl-2-oleophosphatidylethanolamine (POPE). In vitro, displays cytotoxicity against cultured cells but no hemolytic activity towards fresh erythrocytes. Not active against Gram-negative bacterium E.coli ATCC 25922 or Gram-positive bacterium S.aureus ATCC 25923 up to a concentration of 64 uM. In Melicytus latifolius (Norfolk Island mahoe), this protein is Cyclotide mela-7.